We begin with the raw amino-acid sequence, 578 residues long: MKASRFFIGTLKEAPADAEIVSHKLMVRAGMIRRVAGGIYNYLPIGLRSIRKVEAIVREEMNRAGAIELLMPAVQPAELWQESGRWEKYGPELLRFKDRKQSDFVIGPTHEEVVTDIARNQIKSYRQLPVNFYQVQTKFRDEIRPRFGVMRGREFIMKDAYSFDKDMDGLRESYRKMYDAYVRIFTRLGLDFRAVAADNGSIGGSGSHEFHVIAETGEDAIAYCPTSDFAANVEAAEALPLHAERAAPAEEMKKTATPGKAKCEAVAELLNIPLERTIKSIILATENEGAEPTIWLLMLRGDHDLNEIKASKLPGLADFRMATEAEIIETFGTPPGYLGPLNTKKPVKVVADRTVANMSDFVVGSNEVDYHTTGVNWGRDLPEPVVADIRNVKKGDPSPDGKGVIDICRGIEVGHVFQLGTKYSEAMNATCLDETGKPRPMEMGCYGIGVTRILGAAIEQNFDDRGIIWPESIAPFEVVLCPMGYDRSEAVREAADKLYATLLEAGIDVILDDRGERPGVMFADWELIGVPHRLVIGDRGLKDGKLEYQGRRDAEATLLPVEDAAQTVIAKVRAALAR.

It belongs to the class-II aminoacyl-tRNA synthetase family. ProS type 1 subfamily. In terms of assembly, homodimer.

It is found in the cytoplasm. The catalysed reaction is tRNA(Pro) + L-proline + ATP = L-prolyl-tRNA(Pro) + AMP + diphosphate. Its function is as follows. Catalyzes the attachment of proline to tRNA(Pro) in a two-step reaction: proline is first activated by ATP to form Pro-AMP and then transferred to the acceptor end of tRNA(Pro). As ProRS can inadvertently accommodate and process non-cognate amino acids such as alanine and cysteine, to avoid such errors it has two additional distinct editing activities against alanine. One activity is designated as 'pretransfer' editing and involves the tRNA(Pro)-independent hydrolysis of activated Ala-AMP. The other activity is designated 'posttransfer' editing and involves deacylation of mischarged Ala-tRNA(Pro). The misacylated Cys-tRNA(Pro) is not edited by ProRS. The chain is Proline--tRNA ligase from Paraburkholderia xenovorans (strain LB400).